The chain runs to 414 residues: Patatin-like protein 1 (414 aa).

Positions 22 to 228 (LSLDGGGVRG…TANNPTLVAM (207 aa)) constitute a PNPLA domain. Positions 26–31 (GGGVRG) match the GXGXXG motif. Residues 64–68 (GTSTG) carry the GXSXG motif. The active-site Nucleophile is the Ser66. Catalysis depends on Asp215, which acts as the Proton acceptor. The DGA/G signature appears at 215–217 (DGA). A Phosphoserine modification is found at Ser399.

This sequence belongs to the patatin family. In terms of processing, phosphorylated at Ser-399 by CPK3. Phosphorylation enhances PLP1 activity towards phosphatidylcholine. As to expression, expressed specifically in roots and root hairs.

It localises to the cytoplasm. Its function is as follows. Possesses non-specific lipolytic acyl hydrolase (LAH) activity. Catalyzes the hydrolysis of the neutral lipids monogalactosyldiacylglycerol (MGDG), digalactosyldiacylglycerol (DGDG) and phosphatidylglycerol (PG), and less efficiently the polar lipids phosphatidylcholine (PC) and phosphatidylinositol (PI), but not the storage lipid triacylglycerol (TAG). May play a role in root development. In Arabidopsis thaliana (Mouse-ear cress), this protein is Patatin-like protein 1 (PLP1).